The primary structure comprises 83 residues: Mu-theraphotoxin-Hhn2n (83 aa).

The N-terminal stretch at 1-21 (MKASMYLALAGLVLLFVVGYA) is a signal peptide. Residues 22–48 (SESEEKEFPRELLSKIFAVDDFKGEER) constitute a propeptide that is removed on maturation. 3 cysteine pairs are disulfide-bonded: C50/C65, C57/C70, and C64/C77. L81 bears the Leucine amide mark.

Belongs to the neurotoxin 10 (Hwtx-1) family. 15 (Hntx-3) subfamily. In terms of assembly, monomer. As to expression, expressed by the venom gland.

Its subcellular location is the secreted. Functionally, lethal neurotoxin. Selectively blocks tetrodotoxin-sensitive voltage-gated sodium channels (Nav). Does not affect tetrodotoxin-resistant voltage-gated sodium channels or calcium channels. The protein is Mu-theraphotoxin-Hhn2n of Cyriopagopus hainanus (Chinese bird spider).